The sequence spans 86 residues: Phosphocarrier protein HPr (86 aa).

The HPr domain occupies 1 to 86 (MVKKEAIIKA…LAELIESFKE (86 aa)). H15 serves as the catalytic Pros-phosphohistidine intermediate.

The protein belongs to the HPr family.

It localises to the cytoplasm. In terms of biological role, general (non sugar-specific) component of the phosphoenolpyruvate-dependent sugar phosphotransferase system (sugar PTS). This major carbohydrate active-transport system catalyzes the phosphorylation of incoming sugar substrates concomitantly with their translocation across the cell membrane. The phosphoryl group from phosphoenolpyruvate (PEP) is transferred to the phosphoryl carrier protein HPr by enzyme I. Phospho-HPr then transfers it to the PTS EIIA domain. This is Phosphocarrier protein HPr (ptsH) from Borreliella burgdorferi (strain ATCC 35210 / DSM 4680 / CIP 102532 / B31) (Borrelia burgdorferi).